The sequence spans 1300 residues: Serine protease EspP (1300 aa).

Positions 1 to 55 are cleaved as a signal peptide; it reads MNKIYSLKYSHITGGLIAVSELSGRVSSRATGKKKHKRILALCFLGLLQSSYSFA. One can recognise a Peptidase S6 domain in the interval 57–311; it reads QMDISNFYIR…NQTTIDNLKN (255 aa). Catalysis depends on charge relay system residues histidine 127, aspartate 156, and serine 263. Positions 1034 to 1300 constitute an Autotransporter domain; it reads DINGEAGAWA…AVNANFRYSF (267 aa).

Post-translationally, cleaved to release the mature protein from the outer membrane.

The protein localises to the periplasm. It localises to the secreted. Its subcellular location is the cell surface. The protein resides in the cell outer membrane. With respect to regulation, inhibition of cytotoxic activity by phenylmethylsulfonyl fluoride. Functionally, serine protease capable of cleaving pepsin A and human coagulation factor V, which may contribute to the mucosal hemorrhage observed in hemorrhagic colitis. In Escherichia coli O157:H7, this protein is Serine protease EspP (espP).